We begin with the raw amino-acid sequence, 368 residues long: Glycoprotein UL18 (368 aa).

The first 18 residues, 1 to 18 (MMTMWCLTLFVLWMLRVV), serve as a signal peptide directing secretion. The tract at residues 19-114 (GMHVLRYGYT…EIALGYRSQS (96 aa)) is alpha-1-like. N-linked (GlcNAc...) asparagine; by host glycosylation is found at Asn56, Asn66, Asn74, Asn95, Asn123, Asn127, Asn150, Asn167, Asn177, Asn193, Asn240, Asn282, and Asn291. An alpha-2-like region spans residues 115 to 208 (VLTWTHECNT…VIYSGFQPPV (94 aa)). Residues 209-303 (THPVVKGGVR…VEIPISVTSP (95 aa)) form an alpha-3-like region. Residues 321–342 (YNTMTISSVLLALLLCALLFAF) form a helical membrane-spanning segment.

As to quaternary structure, interacts with host LILRB1.

Its subcellular location is the host membrane. Its function is as follows. Plays a role in the protection against host NK cell cytotoxicity by interacting with and modulating the activity of the host inhibitory leukocyte Ig-like receptor 1/LILRB1, which is expressed on monocytes, dendritic cells, as well as subsets of T and NK cells. UL18 exerts an inhibitory effect on LIR-1+ NK cells, while it stimulates LIR-1- NK cell. These modulations prevent lysis of the infected cells by NK cells. This is Glycoprotein UL18 (H301) from Homo sapiens (Human).